The sequence spans 494 residues: Ankyrin repeat domain-containing protein 33B (494 aa).

A disordered region spans residues 1–80 (MVLLAGTGPE…SAESVPEGVP (80 aa)). Residues 30-42 (VEEDPADYEEFED) show a composition bias toward acidic residues. ANK repeat units follow at residues 84–113 (PETA…SVEE), 120–150 (NGRT…DVNW), 154–183 (EGNT…GLDL), 189–218 (FGFT…DVHA), and 223–255 (RGMS…PEQF). The disordered stretch occupies residues 349–494 (RAARGPQAQE…RRTAPWKKRT (146 aa)). The segment covering 371–382 (TGQEDADSREGS) has biased composition (basic and acidic residues). Ser405 carries the phosphoserine modification. Basic and acidic residues-rich tracts occupy residues 440-451 (RPARKGSTKDSG) and 459-487 (RYKE…ERRT). The stretch at 459–488 (RYKEAKEEKRKAEEAEKKRQAEAQKERRTA) forms a coiled coil.

The protein is Ankyrin repeat domain-containing protein 33B (ANKRD33B) of Homo sapiens (Human).